Reading from the N-terminus, the 806-residue chain is Zygotic DNA replication licensing factor mcm3 (806 aa).

The region spanning 295–502 is the MCM domain; sequence VFEQLSRSLA…HDREISDHVL (208 aa). Residue 345–352 participates in ATP binding; that stretch reads GDPSVAKS. The short motif at 477-480 is the Arginine finger element; the sequence is SRFD. Residues 662–738 are disordered; that stretch reads KKRRRREGES…TDSSAKPGLS (77 aa). Over residues 693 to 702 the composition is skewed to basic and acidic residues; that stretch reads AQDGESHDPY.

Belongs to the MCM family. As to quaternary structure, component of the mcm2-7 complex (RLF-M). The complex forms a toroidal hexameric ring with the proposed subunit order mcm2-mcm6-mcm4-mcm7-mcm3-mcm5. Begins to associate with zmcm6 into mcm complexes at the neurula stage. Component of the CMG helicase complex, composed of the mcm2-7 complex, the GINS complex and cdc45.

The protein localises to the nucleus. It localises to the chromosome. It carries out the reaction ATP + H2O = ADP + phosphate + H(+). Acts as a component of the mcm2-7 complex (mcm complex) which is the putative replicative helicase essential for 'once per cell cycle' DNA replication initiation and elongation in eukaryotic cells. The active ATPase sites in the mcm2-7 ring are formed through the interaction surfaces of two neighboring subunits such that a critical structure of a conserved arginine finger motif is provided in trans relative to the ATP-binding site of the Walker A box of the adjacent subunit. The six ATPase active sites, however, are likely to contribute differentially to the complex helicase activity. The existence of maternal and zygotic forms of mcm3 and mcm6 suggests that specific forms of mcm2-7 complexes may be used during different stages of development. In Xenopus laevis (African clawed frog), this protein is Zygotic DNA replication licensing factor mcm3.